A 302-amino-acid chain; its full sequence is uncharacterized protein (302 aa).

The tract at residues 1-24 (MTEISELASSSQKPEKTKYNLPKP) is disordered.

This is an uncharacterized protein from Schizosaccharomyces pombe (strain 972 / ATCC 24843) (Fission yeast).